The sequence spans 726 residues: Serine/threonine-protein kinase PKH3 (726 aa).

Positions phenylalanine 10–phenylalanine 271 constitute a Protein kinase domain. Residues leucine 16–valine 24 and lysine 39 each bind ATP. The Proton acceptor role is filled by aspartate 136. Positions glutamine 629 to tyrosine 679 are disordered. A compositionally biased stretch (basic and acidic residues) spans glutamine 663–threonine 673.

This sequence belongs to the protein kinase superfamily. Ser/Thr protein kinase family.

The catalysed reaction is L-seryl-[protein] + ATP = O-phospho-L-seryl-[protein] + ADP + H(+). It carries out the reaction L-threonyl-[protein] + ATP = O-phospho-L-threonyl-[protein] + ADP + H(+). In terms of biological role, serine/threonine-protein kinase. The chain is Serine/threonine-protein kinase PKH3 (PKH3) from Eremothecium gossypii (strain ATCC 10895 / CBS 109.51 / FGSC 9923 / NRRL Y-1056) (Yeast).